Here is a 622-residue protein sequence, read N- to C-terminus: Chaperone protein HscA homolog (622 aa).

It belongs to the heat shock protein 70 family.

Functionally, chaperone involved in the maturation of iron-sulfur cluster-containing proteins. Has a low intrinsic ATPase activity which is markedly stimulated by HscB. The protein is Chaperone protein HscA homolog of Burkholderia multivorans (strain ATCC 17616 / 249).